A 164-amino-acid polypeptide reads, in one-letter code: Aspartate carbamoyltransferase regulatory chain (164 aa).

Positions 116, 121, 146, and 149 each coordinate Zn(2+).

The protein belongs to the PyrI family. In terms of assembly, contains catalytic and regulatory chains. It depends on Zn(2+) as a cofactor.

In terms of biological role, involved in allosteric regulation of aspartate carbamoyltransferase. In Staphylothermus marinus (strain ATCC 43588 / DSM 3639 / JCM 9404 / F1), this protein is Aspartate carbamoyltransferase regulatory chain.